Reading from the N-terminus, the 1393-residue chain is DNA-directed RNA polymerase subunit beta'' (1393 aa).

Zn(2+)-binding residues include C224, C295, C302, and C305.

Belongs to the RNA polymerase beta' chain family. RpoC2 subfamily. In terms of assembly, in plastids the minimal PEP RNA polymerase catalytic core is composed of four subunits: alpha, beta, beta', and beta''. When a (nuclear-encoded) sigma factor is associated with the core the holoenzyme is formed, which can initiate transcription. It depends on Zn(2+) as a cofactor.

The protein localises to the plastid. The protein resides in the chloroplast. The catalysed reaction is RNA(n) + a ribonucleoside 5'-triphosphate = RNA(n+1) + diphosphate. Its function is as follows. DNA-dependent RNA polymerase catalyzes the transcription of DNA into RNA using the four ribonucleoside triphosphates as substrates. This is DNA-directed RNA polymerase subunit beta'' from Manihot esculenta (Cassava).